The primary structure comprises 239 residues: Probable 2-phosphosulfolactate phosphatase (239 aa).

This sequence belongs to the ComB family. Mg(2+) serves as cofactor.

The catalysed reaction is (2R)-O-phospho-3-sulfolactate + H2O = (2R)-3-sulfolactate + phosphate. This chain is Probable 2-phosphosulfolactate phosphatase, found in Clostridium botulinum (strain Loch Maree / Type A3).